The chain runs to 202 residues: ATP-dependent Clp protease proteolytic subunit (202 aa).

The active-site Nucleophile is serine 106. Histidine 131 is a catalytic residue.

This sequence belongs to the peptidase S14 family. Fourteen ClpP subunits assemble into 2 heptameric rings which stack back to back to give a disk-like structure with a central cavity, resembling the structure of eukaryotic proteasomes.

The protein resides in the cytoplasm. The enzyme catalyses Hydrolysis of proteins to small peptides in the presence of ATP and magnesium. alpha-casein is the usual test substrate. In the absence of ATP, only oligopeptides shorter than five residues are hydrolyzed (such as succinyl-Leu-Tyr-|-NHMec, and Leu-Tyr-Leu-|-Tyr-Trp, in which cleavage of the -Tyr-|-Leu- and -Tyr-|-Trp bonds also occurs).. In terms of biological role, cleaves peptides in various proteins in a process that requires ATP hydrolysis. Has a chymotrypsin-like activity. Plays a major role in the degradation of misfolded proteins. The protein is ATP-dependent Clp protease proteolytic subunit of Methylibium petroleiphilum (strain ATCC BAA-1232 / LMG 22953 / PM1).